A 560-amino-acid chain; its full sequence is Proline--tRNA ligase (560 aa).

The protein belongs to the class-II aminoacyl-tRNA synthetase family. ProS type 1 subfamily. In terms of assembly, homodimer.

The protein localises to the cytoplasm. The catalysed reaction is tRNA(Pro) + L-proline + ATP = L-prolyl-tRNA(Pro) + AMP + diphosphate. Catalyzes the attachment of proline to tRNA(Pro) in a two-step reaction: proline is first activated by ATP to form Pro-AMP and then transferred to the acceptor end of tRNA(Pro). As ProRS can inadvertently accommodate and process non-cognate amino acids such as alanine and cysteine, to avoid such errors it has two additional distinct editing activities against alanine. One activity is designated as 'pretransfer' editing and involves the tRNA(Pro)-independent hydrolysis of activated Ala-AMP. The other activity is designated 'posttransfer' editing and involves deacylation of mischarged Ala-tRNA(Pro). The misacylated Cys-tRNA(Pro) is not edited by ProRS. This chain is Proline--tRNA ligase, found in Vesicomyosocius okutanii subsp. Calyptogena okutanii (strain HA).